A 1826-amino-acid chain; its full sequence is Transcription initiation factor TFIID subunit 1-like (1826 aa).

Disordered stretches follow at residues 118 to 141, 532 to 555, and 1252 to 1276; these read DESQ…YDED, IPDE…SSLK, and RLKR…MKER. The span at 1252–1268 shows a compositional bias: basic and acidic residues; that stretch reads RLKRNQEKEKLKGPPEK. The Nuclear localization signal signature appears at 1370–1377; the sequence is PPKKKRRV. Bromo domains are found at residues 1395-1503 and 1517-1626; these read RRRT…LKEK and LLDD…ITEY. The segment at 1648-1826 is disordered; that stretch reads AELESLDPMT…SGEHKDGHGK (179 aa). Residues 1660–1700 show a composition bias toward polar residues; that stretch reads PYTSQPPDMYDTNTSLSTSRDASVFQDESNLSVLDISTATP. 3 stretches are compositionally biased toward acidic residues: residues 1714–1729, 1740–1750, and 1768–1783; these read EDSD…EEED, GDGDLADEEEG, and EGED…EEGD. Polar residues predominate over residues 1787–1797; the sequence is SAIQLSESGSD. Residues 1817-1826 show a composition bias toward basic and acidic residues; the sequence is SGEHKDGHGK.

This sequence belongs to the TAF1 family. As to quaternary structure, can bind directly to TATA-box binding protein (TBP). Interacts (via bromo domains) with acetylated lysine residues on the N-terminus of histone H1.4, H2A, H2B, H3 and H4 (in vitro). In terms of tissue distribution, testis specific, expressed apparently in germ cells.

It localises to the nucleus. Its function is as follows. May act as a functional substitute for TAF1/TAFII250 during male meiosis, when sex chromosomes are transcriptionally silenced. The sequence is that of Transcription initiation factor TFIID subunit 1-like (TAF1L) from Homo sapiens (Human).